We begin with the raw amino-acid sequence, 149 residues long: Transcriptional repressor NrdR (149 aa).

Residues 3 to 34 fold into a zinc finger; it reads CPFCSTEETKVIDSRLVSEGYQVRRRRECGNC. The 91-residue stretch at 49 to 139 folds into the ATP-cone domain; the sequence is PKVIKNDGTR…VYLSFDDINQ (91 aa).

It belongs to the NrdR family. Zn(2+) is required as a cofactor.

Negatively regulates transcription of bacterial ribonucleotide reductase nrd genes and operons by binding to NrdR-boxes. The protein is Transcriptional repressor NrdR of Pasteurella multocida (strain Pm70).